A 60-amino-acid polypeptide reads, in one-letter code: Large ribosomal subunit protein uL30 (60 aa).

The protein belongs to the universal ribosomal protein uL30 family. Part of the 50S ribosomal subunit.

This chain is Large ribosomal subunit protein uL30, found in Desulfotalea psychrophila (strain LSv54 / DSM 12343).